The sequence spans 283 residues: Bifunctional protein FolD (283 aa).

NADP(+)-binding positions include 166–168 (GRS), Ser191, and Ile232.

This sequence belongs to the tetrahydrofolate dehydrogenase/cyclohydrolase family. As to quaternary structure, homodimer.

The catalysed reaction is (6R)-5,10-methylene-5,6,7,8-tetrahydrofolate + NADP(+) = (6R)-5,10-methenyltetrahydrofolate + NADPH. It catalyses the reaction (6R)-5,10-methenyltetrahydrofolate + H2O = (6R)-10-formyltetrahydrofolate + H(+). It functions in the pathway one-carbon metabolism; tetrahydrofolate interconversion. Catalyzes the oxidation of 5,10-methylenetetrahydrofolate to 5,10-methenyltetrahydrofolate and then the hydrolysis of 5,10-methenyltetrahydrofolate to 10-formyltetrahydrofolate. In Rickettsia bellii (strain RML369-C), this protein is Bifunctional protein FolD.